Here is a 389-residue protein sequence, read N- to C-terminus: tRNA-specific 2-thiouridylase MnmA (389 aa).

ATP-binding positions include 33-40 (GLSGGVDS) and L59. The Nucleophile role is filled by C120. A disulfide bond links C120 and C219. G145 lines the ATP pocket. The segment at 169–171 (KDQ) is interaction with tRNA. The active-site Cysteine persulfide intermediate is C219. The interaction with tRNA stretch occupies residues 326–327 (RY).

The protein belongs to the MnmA/TRMU family.

The protein localises to the cytoplasm. The catalysed reaction is S-sulfanyl-L-cysteinyl-[protein] + uridine(34) in tRNA + AH2 + ATP = 2-thiouridine(34) in tRNA + L-cysteinyl-[protein] + A + AMP + diphosphate + H(+). Catalyzes the 2-thiolation of uridine at the wobble position (U34) of tRNA, leading to the formation of s(2)U34. This chain is tRNA-specific 2-thiouridylase MnmA, found in Synechococcus sp. (strain WH7803).